A 614-amino-acid chain; its full sequence is Serine/threonine-protein kinase-like protein E (614 aa).

One can recognise a Protein kinase domain in the interval 15–404 (YLIQLHLGQN…NPNTNGAPLS (390 aa)). Position 21-29 (21-29 (LGQNSLGQQ)) interacts with ATP. Polar residues predominate over residues 256–269 (PEQTDNGVGKSSTG). Residues 256-284 (PEQTDNGVGKSSTGEPPFPTVHQSPESSS) form a disordered region.

It belongs to the protein kinase superfamily. Ser/Thr protein kinase family.

Lacks protein kinase activity. This is Serine/threonine-protein kinase-like protein E (spkE) from Synechocystis sp. (strain ATCC 27184 / PCC 6803 / Kazusa).